Reading from the N-terminus, the 499-residue chain is U4/U6 small nuclear ribonucleoprotein Prp31 (499 aa).

The disordered stretch occupies residues methionine 1–glutamate 37. The segment covering leucine 7–glutamate 37 has biased composition (acidic residues). Coiled-coil stretches lie at residues glutamate 85–lysine 120 and glutamate 181–isoleucine 215. The 119-residue stretch at isoleucine 215–glutamate 333 folds into the Nop domain. Residues proline 334–arginine 357 form a disordered region. The Nuclear localization signal (NLS) signature appears at arginine 351–glutamate 364. Phosphoserine is present on residues serine 379, serine 395, and serine 432. Position 438 is an N6-acetyllysine (lysine 438). Serine 439 is subject to Phosphoserine. Residue threonine 440 is modified to Phosphothreonine. At serine 450 the chain carries Phosphoserine. Threonine 455 bears the Phosphothreonine mark. Glycyl lysine isopeptide (Lys-Gly) (interchain with G-Cter in SUMO2) cross-links involve residues lysine 471 and lysine 478.

The protein belongs to the PRP31 family. Identified in the spliceosome B complex. Component of the U4/U6-U5 tri-snRNP complex composed of the U4, U6 and U5 snRNAs and at least PRPF3, PRPF4, PRPF6, PRPF8, PRPF31, SNRNP200, TXNL4A, SNRNP40, DDX23, CD2BP2, PPIH, SNU13, EFTUD2, SART1 and USP39. Interacts with a complex formed by SNU13 and U4 snRNA, but not with SNU13 or U4 snRNA alone. The complex formed by SNU13 and PRPF31 also binds U4atac snRNA, a characteristic component of specific, less abundant spliceosomal complexes. Interacts with PRPF6/U5 snRNP-associated 102 kDa protein. Component of some MLL1/MLL complex, at least composed of the core components KMT2A/MLL1, ASH2L, HCFC1/HCF1, WDR5 and RBBP5, as well as the facultative components BACC1, CHD8, E2F6, HSP70, INO80C, KANSL1, LAS1L, MAX, MCRS1, MGA, KAT8/MOF, PELP1, PHF20, PRP31, RING2, RUVB1/TIP49A, RUVB2/TIP49B, SENP3, TAF1, TAF4, TAF6, TAF7, TAF9 and TEX10. Interacts (via its NLS) with CTNNBL1. Interacts with USH1G. Post-translationally, phosphorylated by PRP4K during spliceosome assembly. Ubiquitously expressed.

The protein localises to the nucleus. Its subcellular location is the nucleus speckle. The protein resides in the cajal body. Its function is as follows. Involved in pre-mRNA splicing as component of the spliceosome. Required for the assembly of the U4/U5/U6 tri-snRNP complex, one of the building blocks of the spliceosome. The sequence is that of U4/U6 small nuclear ribonucleoprotein Prp31 from Homo sapiens (Human).